The chain runs to 155 residues: Protein-export protein SecB (155 aa).

The protein belongs to the SecB family. In terms of assembly, homotetramer, a dimer of dimers. One homotetramer interacts with 1 SecA dimer.

The protein localises to the cytoplasm. One of the proteins required for the normal export of preproteins out of the cell cytoplasm. It is a molecular chaperone that binds to a subset of precursor proteins, maintaining them in a translocation-competent state. It also specifically binds to its receptor SecA. This chain is Protein-export protein SecB, found in Escherichia coli O127:H6 (strain E2348/69 / EPEC).